Reading from the N-terminus, the 461-residue chain is Probable tubulin polyglutamylase TTLL9 (461 aa).

Residues 1 to 21 (MSRPKNQNYKGHGLQKGKERE) are disordered. Residues 22–402 (QRASIRFKTT…EARLTGREKR (381 aa)) form the TTL domain. ATP contacts are provided by residues Lys149 and 155–156 (QG). Gln155 provides a ligand contact to a protein. Residues 182–208 (SLEAQPARNTVNPSGSHDTRSSDDQKD) are disordered. Residues 188–197 (ARNTVNPSGS) show a composition bias toward polar residues. Residues 198–208 (HDTRSSDDQKD) are compositionally biased toward basic and acidic residues. Residues 218–221 (QRYI) and 231–233 (KFD) each bind ATP. Residue Arg257 coordinates L-glutamate. ATP is bound at residue 276–277 (TN). An L-glutamate-binding site is contributed by Lys294. Residues Asp348, Glu361, and Asn363 each coordinate Mg(2+). Lys379 contributes to the L-glutamate binding site.

It belongs to the tubulin--tyrosine ligase family. Mg(2+) serves as cofactor.

It localises to the cytoplasm. Its subcellular location is the cytoskeleton. The protein resides in the cilium basal body. The protein localises to the flagellum axoneme. It catalyses the reaction (L-glutamyl)(n)-gamma-L-glutamyl-L-glutamyl-[protein] + L-glutamate + ATP = (L-glutamyl)(n+1)-gamma-L-glutamyl-L-glutamyl-[protein] + ADP + phosphate + H(+). Its function is as follows. Probable tubulin polyglutamylase that generates side chains of glutamate on the gamma-carboxyl group of specific glutamate residues within the C-terminal tail of target proteins. Similar to TTLL1, may acquire enzymatic activity only in complex with other proteins as it is most likely lacking domains important for autonomous activity. Mediates tubulin polyglutamylation which induces establishment of microtubule heterogeneity in sperm flagella, thereby playing a role in normal motile flagella axoneme structure and sperm flagella beating pattern. The polypeptide is Probable tubulin polyglutamylase TTLL9 (TTLL9) (Bos taurus (Bovine)).